A 348-amino-acid chain; its full sequence is CCAAT/enhancer-binding protein beta (348 aa).

Residues 1 to 24 form a required for Lys-174 sumoylation region; the sequence is MQRLVVWDPVCLPLPPPPPAFKSM. Position 3 is an asymmetric dimethylarginine; by CARM1 (Arg-3). Positions 24-135 are required for MYC transcriptional repression; that stretch reads MEVANFYYEA…YGGKNCKKAA (112 aa). The residue at position 43 (Lys-43) is an N6-acetyllysine; alternate. Position 43 is an N6-methylated lysine; alternate (Lys-43). Disordered stretches follow at residues 44 to 65 and 79 to 112; these read AAPAAPPADRPGPRPPTGELGS and LEPLGAPQAPAPTTASDTFEAAPSAPAPVPASSG. The span at 47-59 shows a compositional bias: pro residues; that stretch reads AAPPADRPGPRPP. The short motif at 116–124 is the 9aaTAD element; that stretch reads DFLSDLFSD. 2 positions are modified to N6-acetyllysine; by KAT2A and KAT2B: Lys-129 and Lys-132. At Lys-133 the chain carries N6-acetyllysine; by KAT2A and KAT2B; alternate. Lys-133 is covalently cross-linked (Glycyl lysine isopeptide (Lys-Gly) (interchain with G-Cter in SUMO2); alternate). The interval 158-178 is disordered; it reads APLHPPPPPPPPPAELKAEPG. A compositionally biased stretch (pro residues) spans 160-171; sequence LHPPPPPPPPPA. Lys-174 is covalently cross-linked (Glycyl lysine isopeptide (Lys-Gly) (interchain with G-Cter in SUMO2); alternate). A Glycyl lysine isopeptide (Lys-Gly) (interchain with G-Cter in SUMO); alternate cross-link involves residue Lys-174. Residues Lys-185 and Lys-187 each participate in a glycyl lysine isopeptide (Lys-Gly) (interchain with G-Cter in SUMO2) cross-link. The segment covering 219 to 259 has biased composition (low complexity); sequence SGSSGSLSTSSSSSPPGTPSPADAKATPAAAACYAGAAPAP. The disordered stretch occupies residues 219 to 277; that stretch reads SGSSGSLSTSSSSSPPGTPSPADAKATPAAAACYAGAAPAPSQVKSKAKKTVDKHSDEY. Thr-227 carries the phosphothreonine; by GSK3-beta modification. O-linked (GlcNAc) serine glycosylation is found at Ser-228 and Ser-229. Phosphoserine; by GSK3-beta is present on Ser-232. Phosphothreonine; by RPS6KA1, CDK2 and MAPK is present on Thr-236. Residues Lys-263 and Lys-265 each participate in a glycyl lysine isopeptide (Lys-Gly) (interchain with G-Cter in SUMO2) cross-link. A compositionally biased stretch (basic and acidic residues) spans 268 to 277; it reads KTVDKHSDEY. Position 269 is a phosphothreonine; by RPS6KA1 and PKC/PRKCA (Thr-269). The 64-residue stretch at 274–337 folds into the bZIP domain; it reads SDEYKIRRER…STLRNLFKTL (64 aa). Positions 278 to 298 are basic motif; the sequence is KIRRERNNIAVRKSRDKAKMR. Ser-291 carries the phosphoserine; by PKC/PRKCA modification. Positions 300-307 are leucine-zipper; that stretch reads LETQHKVL. Ser-328 is subject to Phosphoserine; by CaMK2. Lys-335 participates in a covalent cross-link: Glycyl lysine isopeptide (Lys-Gly) (interchain with G-Cter in SUMO2).

The protein belongs to the bZIP family. C/EBP subfamily. As to quaternary structure, binds DNA as a homodimer and as a heterodimer. Interacts with ATF4. Binds DNA as a heterodimer with ATF4. Interacts with MYB; within the complex, MYB and CEBPB bind to different promoter regions. Can form stable heterodimers with CEBPA, CEBPD and CEBPG. Interacts with SIX1. Interacts with TRIM28 and PTGES2. Interacts with PRDM16. Interacts with CCDC85B. Forms a complex with THOC5. Interacts with ZNF638; this interaction increases transcriptional activation. Interacts with CIDEA and CIDEC; these interactions increase transcriptional activation of a subset of CEBPB downstream target genes. Interacts with DDIT3/CHOP. Interacts with EP300; recruits EP300 to chromatin. Interacts with RORA; the interaction disrupts interaction with EP300. Interacts (not methylated) with MED23, MED26, SMARCA2, SMARCB1 and SMARCC1. Interacts with KAT2A and KAT2B. Interacts with ATF5; EP300 is required for ATF5 and CEBPB interaction and DNA binding. Interacts with NFE2L1; the heterodimer represses expression of DSPP during odontoblast differentiation. Methylated. Methylation at Arg-3 by CARM1 and at Lys-43 by EHMT2 inhibit transactivation activity. Methylation is probably inhibited by phosphorylation at Thr-236. Post-translationally, sumoylated by polymeric chains of SUMO2 or SUMO3. Sumoylation at Lys-174 is required for inhibition of T-cells proliferation. In adipocytes, sumoylation at Lys-174 by PIAS1 leads to ubiquitination and subsequent proteasomal degradation. Desumoylated by SENP2, which abolishes ubiquitination and stabilizes protein levels. In terms of processing, ubiquitinated, leading to proteasomal degradation. Phosphorylated at Thr-236 by MAPK and CDK2, serves to prime phosphorylation at Thr-227 and Ser-232 by GSK3B and acquire DNA-binding as well as transactivation activities, required to induce adipogenesis. MAPK and CDK2 act sequentially to maintain Thr-236 in the primed phosphorylated state during mitotical cloning expansion and thereby progression of terminal differentiation. Phosphorylation at Thr-269 enhances transactivation activity. Phosphorylation at Ser-328 in response to calcium increases transactivation activity. Phosphorylated at Thr-236 by RPS6KA1. Post-translationally, O-glycosylated, glycosylation at Ser-228 and Ser-229 prevents phosphorylation on Thr-236, Ser-232 and Thr-227 and DNA binding activity which delays the adipocyte differentiation program. In terms of processing, acetylated. Acetylation at Lys-43 is an important and dynamic regulatory event that contributes to its ability to transactivate target genes, including those associated with adipogenesis and adipocyte function. Deacetylation by HDAC1 represses its transactivation activity. Acetylated by KAT2A and KAT2B within a cluster of lysine residues between amino acids 129-133, this acetylation is strongly induced by glucocorticoid treatment and enhances transactivation activity.

Its subcellular location is the nucleus. The protein localises to the cytoplasm. Important transcription factor regulating the expression of genes involved in immune and inflammatory responses. Also plays a significant role in adipogenesis, as well as in the gluconeogenic pathway, liver regeneration, and hematopoiesis. The consensus recognition site is 5'-T[TG]NNGNAA[TG]-3'. Its functional capacity is governed by protein interactions and post-translational protein modifications. During early embryogenesis, plays essential and redundant roles with CEBPA. Has a promitotic effect on many cell types such as hepatocytes and adipocytes but has an antiproliferative effect on T-cells by repressing MYC expression, facilitating differentiation along the T-helper 2 lineage. Binds to regulatory regions of several acute-phase and cytokines genes and plays a role in the regulation of acute-phase reaction and inflammation. Also plays a role in intracellular bacteria killing. During adipogenesis, is rapidly expressed and, after activation by phosphorylation, induces CEBPA and PPARG, which turn on the series of adipocyte genes that give rise to the adipocyte phenotype. The delayed transactivation of the CEBPA and PPARG genes by CEBPB appears necessary to allow mitotic clonal expansion and thereby progression of terminal differentiation. Essential for female reproduction because of a critical role in ovarian follicle development. Restricts osteoclastogenesis: together with NFE2L1; represses expression of DSPP during odontoblast differentiation. This is CCAAT/enhancer-binding protein beta (CEBPB) from Bos taurus (Bovine).